Reading from the N-terminus, the 233-residue chain is DNA repair protein RecO (233 aa).

Belongs to the RecO family.

In terms of biological role, involved in DNA repair and RecF pathway recombination. This is DNA repair protein RecO from Pseudomonas paraeruginosa (strain DSM 24068 / PA7) (Pseudomonas aeruginosa (strain PA7)).